The primary structure comprises 332 residues: Succinylglutamate desuccinylase (332 aa).

Zn(2+) is bound by residues His59, Glu62, and His151. Glu215 is a catalytic residue.

This sequence belongs to the AspA/AstE family. Succinylglutamate desuccinylase subfamily. Zn(2+) serves as cofactor.

It carries out the reaction N-succinyl-L-glutamate + H2O = L-glutamate + succinate. It functions in the pathway amino-acid degradation; L-arginine degradation via AST pathway; L-glutamate and succinate from L-arginine: step 5/5. Transforms N(2)-succinylglutamate into succinate and glutamate. The protein is Succinylglutamate desuccinylase of Pseudomonas aeruginosa (strain UCBPP-PA14).